A 349-amino-acid polypeptide reads, in one-letter code: Protein RecA (349 aa).

69–76 (GPESSGKT) is a binding site for ATP.

The protein belongs to the RecA family.

Its subcellular location is the cytoplasm. In terms of biological role, can catalyze the hydrolysis of ATP in the presence of single-stranded DNA, the ATP-dependent uptake of single-stranded DNA by duplex DNA, and the ATP-dependent hybridization of homologous single-stranded DNAs. It interacts with LexA causing its activation and leading to its autocatalytic cleavage. The protein is Protein RecA of Crocosphaera subtropica (strain ATCC 51142 / BH68) (Cyanothece sp. (strain ATCC 51142)).